Reading from the N-terminus, the 946-residue chain is MGFWENNKDSITSGLKSAGKYGYQGTKYVAKTGYKASKKHYNNSKARRERKSGKKNSSDEEYESEDEMEHERKPTDIRSLKDPKSFPPPPLKPGQKTYTGQQQQQMPNGQASYAFQGAYQGQPGAGSMEQSQYAQPQYNQYPQQQLQQGVVPQQPPIYGEQVPPYGSNSNATSYQSLSQQNQPQYAIPSQVSLNSASQQSTGFVSQNLQYGTQSSNPAPSPSFQNGLQCHQQPQYVSHGSTNLGQSQFPSGQQQQPTTQFGQQVLPSPAQPHPQPQQQQQGQPLPPPRGQVILPAPGEPLSNGFGQQQQQQQQQQQQQQQPLNQNNALLPQMNVEGVSGMAAVQPVYGQAMSSTTNMQDSNPSYGASPMQGQPPVGGQPPVPVRMQPQPPQPMQQGNIYPIEPSLDSTSSTPHFEVTPFDPDAPAPKPKIDIPTVDVSSLPPPPTHRDRGAVLHQEPAPSGKIQPNTTSSAASLPAKHSRTTTADNERNSGNKENDESTSKSSILGHYDVDVNIMPPPKPFRHGLDSVPSEHTRKNASERAVPILPPRNNVEPPPPPSRGNFERTESVLSTNAANVQEDPISNFLPPPKPFRHTETKQNQNSKASPVEIKDEVLPGHPSEEDRNVEPSLLPQSKPQSQSQSQFRRAHMETQPIQNFQPPPKPFRRSQSSNSSDSSYTIDGPEANHGRGRGRIAKHHDGDEYNPKSENSTENGRLGDAPNSFIRKRAPTPPAPSRSEKLHEGAITSEVDSSKDANKYEKSIPPVTSSIQAQQSTKKAPPPVVKPKPRNFSLKANEYPKELTREATGQDEVLNSITNELSHIKLRKTNVNLEKLGGSKKVKDSSPVPSDLDEKYVSASGSITPPRPPPSRSSPKKVPPVVPKKNDNLKKKPPVVPKKKPLLKSLEPRPIEMERAYSGDISAADDNLNPFERYKRNVVPQEDDRLHKLK.

Disordered stretches follow at residues 1–333 (MGFW…PQMN) and 351–903 (MSST…KSLE). Basic residues predominate over residues 36–54 (ASKKHYNNSKARRERKSGK). Phosphoserine occurs at positions 57, 58, and 64. The segment covering 59–68 (DEEYESEDEM) has biased composition (acidic residues). The segment covering 69-84 (EHERKPTDIRSLKDPK) has biased composition (basic and acidic residues). Low complexity-rich tracts occupy residues 93 to 105 (PGQKTYTGQQQQQ) and 130 to 158 (QSQYAQPQYNQYPQQQLQQGVVPQQPPIY). Polar residues predominate over residues 166-244 (GSNSNATSYQ…YVSHGSTNLG (79 aa)). Low complexity-rich tracts occupy residues 245 to 267 (QSQFPSGQQQQPTTQFGQQVLPS) and 306 to 320 (QQQQQQQQQQQQQQQ). Residues 351–364 (MSSTTNMQDSNPSY) show a composition bias toward polar residues. A compositionally biased stretch (pro residues) spans 376-392 (GGQPPVPVRMQPQPPQP). The span at 463–472 (IQPNTTSSAA) shows a compositional bias: polar residues. A Phosphoserine modification is found at S473. Basic and acidic residues-rich tracts occupy residues 485-499 (DNERNSGNKENDEST), 523-538 (HGLDSVPSEHTRKNAS), and 608-625 (EIKDEVLPGHPSEEDRNV). Low complexity-rich tracts occupy residues 627 to 642 (PSLLPQSKPQSQSQSQ) and 666 to 675 (SQSSNSSDSS). T728 carries the phosphothreonine modification. Basic and acidic residues predominate over residues 748 to 758 (DSSKDANKYEK). Positions 762 to 773 (PVTSSIQAQQST) are enriched in polar residues. T860 bears the Phosphothreonine mark. A compositionally biased stretch (pro residues) spans 861–878 (PPRPPPSRSSPKKVPPVV). The segment covering 887-898 (KKPPVVPKKKPL) has biased composition (basic residues).

The protein belongs to the AIM3 family. Interacts with RVS167.

The protein resides in the membrane raft. This is Altered inheritance of mitochondria protein 3 (AIM3) from Saccharomyces cerevisiae (strain Lalvin EC1118 / Prise de mousse) (Baker's yeast).